We begin with the raw amino-acid sequence, 262 residues long: Hydroxyacylglutathione hydrolase (262 aa).

Residues His-53, His-55, Asp-57, His-58, His-111, Asp-128, and His-166 each contribute to the Zn(2+) site.

The protein belongs to the metallo-beta-lactamase superfamily. Glyoxalase II family. As to quaternary structure, monomer. Zn(2+) serves as cofactor.

The enzyme catalyses an S-(2-hydroxyacyl)glutathione + H2O = a 2-hydroxy carboxylate + glutathione + H(+). It functions in the pathway secondary metabolite metabolism; methylglyoxal degradation; (R)-lactate from methylglyoxal: step 2/2. Thiolesterase that catalyzes the hydrolysis of S-D-lactoyl-glutathione to form glutathione and D-lactic acid. The polypeptide is Hydroxyacylglutathione hydrolase (Nitrosomonas europaea (strain ATCC 19718 / CIP 103999 / KCTC 2705 / NBRC 14298)).